A 435-amino-acid polypeptide reads, in one-letter code: Trigger factor (435 aa).

Residues 183–263 enclose the PPIase FKBP-type domain; that stretch reads GDFINVDVTI…VKTIWQGNMP (81 aa).

This sequence belongs to the FKBP-type PPIase family. Tig subfamily.

Its subcellular location is the cytoplasm. It carries out the reaction [protein]-peptidylproline (omega=180) = [protein]-peptidylproline (omega=0). Functionally, involved in protein export. Acts as a chaperone by maintaining the newly synthesized protein in an open conformation. Functions as a peptidyl-prolyl cis-trans isomerase. In Protochlamydia amoebophila (strain UWE25), this protein is Trigger factor.